Here is a 79-residue protein sequence, read N- to C-terminus: Putative membrane protein insertion efficiency factor (79 aa).

This sequence belongs to the UPF0161 family.

It is found in the cell inner membrane. Its function is as follows. Could be involved in insertion of integral membrane proteins into the membrane. In Rippkaea orientalis (strain PCC 8801 / RF-1) (Cyanothece sp. (strain PCC 8801)), this protein is Putative membrane protein insertion efficiency factor.